Reading from the N-terminus, the 470-residue chain is Na(+)-translocating NADH-quinone reductase subunit A (470 aa).

It belongs to the NqrA family. In terms of assembly, composed of six subunits; NqrA, NqrB, NqrC, NqrD, NqrE and NqrF.

The enzyme catalyses a ubiquinone + n Na(+)(in) + NADH + H(+) = a ubiquinol + n Na(+)(out) + NAD(+). Its function is as follows. NQR complex catalyzes the reduction of ubiquinone-1 to ubiquinol by two successive reactions, coupled with the transport of Na(+) ions from the cytoplasm to the periplasm. NqrA to NqrE are probably involved in the second step, the conversion of ubisemiquinone to ubiquinol. The chain is Na(+)-translocating NADH-quinone reductase subunit A from Chlamydia caviae (strain ATCC VR-813 / DSM 19441 / 03DC25 / GPIC) (Chlamydophila caviae).